A 141-amino-acid polypeptide reads, in one-letter code: ATP synthase epsilon chain (141 aa).

Belongs to the ATPase epsilon chain family. In terms of assembly, F-type ATPases have 2 components, CF(1) - the catalytic core - and CF(0) - the membrane proton channel. CF(1) has five subunits: alpha(3), beta(3), gamma(1), delta(1), epsilon(1). CF(0) has three main subunits: a, b and c.

Its subcellular location is the cell inner membrane. Functionally, produces ATP from ADP in the presence of a proton gradient across the membrane. The protein is ATP synthase epsilon chain of Halorhodospira halophila (strain DSM 244 / SL1) (Ectothiorhodospira halophila (strain DSM 244 / SL1)).